A 995-amino-acid chain; its full sequence is Bifunctional glutamine synthetase adenylyltransferase/adenylyl-removing enzyme (995 aa).

The interval 1 to 487 (MNVTKPATQR…LHAKLFYQPL (487 aa)) is adenylyl removase. The tract at residues 492–995 (APAGLEIAGR…KAVVRKVFGS (504 aa)) is adenylyl transferase.

Belongs to the GlnE family. Requires Mg(2+) as cofactor.

It catalyses the reaction [glutamine synthetase]-O(4)-(5'-adenylyl)-L-tyrosine + phosphate = [glutamine synthetase]-L-tyrosine + ADP. The catalysed reaction is [glutamine synthetase]-L-tyrosine + ATP = [glutamine synthetase]-O(4)-(5'-adenylyl)-L-tyrosine + diphosphate. Involved in the regulation of glutamine synthetase GlnA, a key enzyme in the process to assimilate ammonia. When cellular nitrogen levels are high, the C-terminal adenylyl transferase (AT) inactivates GlnA by covalent transfer of an adenylyl group from ATP to specific tyrosine residue of GlnA, thus reducing its activity. Conversely, when nitrogen levels are low, the N-terminal adenylyl removase (AR) activates GlnA by removing the adenylyl group by phosphorolysis, increasing its activity. The regulatory region of GlnE binds the signal transduction protein PII (GlnB) which indicates the nitrogen status of the cell. The protein is Bifunctional glutamine synthetase adenylyltransferase/adenylyl-removing enzyme of Mycobacterium marinum (strain ATCC BAA-535 / M).